We begin with the raw amino-acid sequence, 598 residues long: Biotin-dependent acyl-coenzyme A carboxylase alpha3 subunit (598 aa).

Residues 8–452 (RIAKVLVANR…SFSVHTRWIE (445 aa)) enclose the Biotin carboxylation domain. One can recognise an ATP-grasp domain in the interval 127-324 (RHIAARAQAP…LVLQQFKIAN (198 aa)). 155–216 (AKEHGVPIAI…ERYLDKPRHV (62 aa)) is a binding site for ATP. Residues Glu282, Glu295, and Asn297 each contribute to the Mg(2+) site. 3 residues coordinate Mn(2+): Glu282, Glu295, and Asn297. Residues 506–531 (PAGVIRKKPKPRKRGGHTGAATSGDA) form a disordered region. The segment covering 510–521 (IRKKPKPRKRGG) has biased composition (basic residues). Residues 522–598 (HTGAATSGDA…TQGTVLAEIK (77 aa)) enclose the Biotinyl-binding domain. Lys564 is subject to N6-biotinyllysine.

As to quaternary structure, the biotin-dependent acyl-CoA carboxylase complex is composed of AccA3, which contains the biotin carboxylase (BC) and biotin carboxyl carrier protein (BCCP) domains, and an AccD protein, which contains the carboxyl transferase (CT) domain. It depends on Mg(2+) as a cofactor. Mn(2+) is required as a cofactor. Biotin serves as cofactor.

The enzyme catalyses N(6)-biotinyl-L-lysyl-[protein] + hydrogencarbonate + ATP = N(6)-carboxybiotinyl-L-lysyl-[protein] + ADP + phosphate + H(+). It participates in lipid metabolism; fatty acid biosynthesis. The protein operates within lipid metabolism; mycolic acid biosynthesis. Functionally, component of a biotin-dependent acyl-CoA carboxylase complex. This subunit catalyzes the ATP-dependent carboxylation of the biotin carried by the biotin carboxyl carrier (BCC) domain, resulting in the formation of carboxyl biotin. This chain is Biotin-dependent acyl-coenzyme A carboxylase alpha3 subunit (bccA), found in Mycobacterium leprae (strain TN).